A 203-amino-acid chain; its full sequence is Sarcosine oxidase subunit gamma (203 aa).

It belongs to the SoxG family. As to quaternary structure, heterotetramer composed of subunits alpha (SoxA), beta (SoxB), gamma (SoxG) and delta (SoxD).

The protein localises to the cytoplasm. It catalyses the reaction sarcosine + (6S)-5,6,7,8-tetrahydrofolate + O2 = (6R)-5,10-methylene-5,6,7,8-tetrahydrofolate + glycine + H2O2. It carries out the reaction sarcosine + O2 + H2O = formaldehyde + glycine + H2O2. Functionally, in the presence of tetrahydrofolate, catalyzes the oxidative demethylation of sarcosine to yield glycine, 5,10-methylenetetrahydrofolate and hydrogen peroxide. In the absence of tetrahydrofolate, catalyzes the oxidative demethylation of sarcosine to yield glycine, formaldehyde and hydrogen peroxide. This Arthrobacter sp protein is Sarcosine oxidase subunit gamma (soxG).